We begin with the raw amino-acid sequence, 123 residues long: uncharacterized protein (123 aa).

Residues 76–97 (ENNKRKKKSEGERVRSPRTFRG) are disordered.

This is an uncharacterized protein from Saccharomyces cerevisiae (strain ATCC 204508 / S288c) (Baker's yeast).